A 143-amino-acid polypeptide reads, in one-letter code: 3-hydroxyacyl-[acyl-carrier-protein] dehydratase FabZ (143 aa).

His-47 is an active-site residue.

Belongs to the thioester dehydratase family. FabZ subfamily.

It localises to the cytoplasm. It carries out the reaction a (3R)-hydroxyacyl-[ACP] = a (2E)-enoyl-[ACP] + H2O. Involved in unsaturated fatty acids biosynthesis. Catalyzes the dehydration of short chain beta-hydroxyacyl-ACPs and long chain saturated and unsaturated beta-hydroxyacyl-ACPs. The protein is 3-hydroxyacyl-[acyl-carrier-protein] dehydratase FabZ of Moorella thermoacetica (strain ATCC 39073 / JCM 9320).